The chain runs to 193 residues: dCTP deaminase (193 aa).

DCTP is bound by residues R110 to R115, D128, V136 to E138, Y171, K178, and Q182. The active-site Proton donor/acceptor is the E138. Residues R169 to D193 are disordered.

The protein belongs to the dCTP deaminase family. In terms of assembly, homotrimer.

The enzyme catalyses dCTP + H2O + H(+) = dUTP + NH4(+). Its pathway is pyrimidine metabolism; dUMP biosynthesis; dUMP from dCTP (dUTP route): step 1/2. Its function is as follows. Catalyzes the deamination of dCTP to dUTP. The sequence is that of dCTP deaminase from Escherichia coli O1:K1 / APEC.